A 117-amino-acid polypeptide reads, in one-letter code: Basic phospholipase A2 pseudexin B chain (117 aa).

7 cysteine pairs are disulfide-bonded: C11/C71, C27/C117, C29/C45, C44/C98, C51/C91, C60/C84, and C78/C89. Residues Y28, G30, and G32 each contribute to the Ca(2+) site. The active site involves H48. D49 is a binding site for Ca(2+). Residue D92 is part of the active site.

Belongs to the phospholipase A2 family. Group I subfamily. D49 sub-subfamily. It depends on Ca(2+) as a cofactor. Expressed by the venom gland.

The protein resides in the secreted. It carries out the reaction a 1,2-diacyl-sn-glycero-3-phosphocholine + H2O = a 1-acyl-sn-glycero-3-phosphocholine + a fatty acid + H(+). PLA2 catalyzes the calcium-dependent hydrolysis of the 2-acyl groups in 3-sn-phosphoglycerides. The chain is Basic phospholipase A2 pseudexin B chain from Pseudechis porphyriacus (Red-bellied black snake).